The primary structure comprises 573 residues: DNA ligase (573 aa).

An ATP-binding site is contributed by Glu-250. Lys-252 functions as the N6-AMP-lysine intermediate in the catalytic mechanism. Arg-257, Arg-272, Glu-301, Phe-342, Arg-432, and Lys-438 together coordinate ATP.

It belongs to the ATP-dependent DNA ligase family. Mg(2+) serves as cofactor.

It catalyses the reaction ATP + (deoxyribonucleotide)n-3'-hydroxyl + 5'-phospho-(deoxyribonucleotide)m = (deoxyribonucleotide)n+m + AMP + diphosphate.. Its function is as follows. DNA ligase that seals nicks in double-stranded DNA during DNA replication, DNA recombination and DNA repair. This chain is DNA ligase, found in Methanococcus maripaludis (strain C7 / ATCC BAA-1331).